The sequence spans 1163 residues: NACHT, LRR and PYD domains-containing protein 5 (1163 aa).

Basic and acidic residues-rich tracts occupy residues 1-42 (MGPP…KDQG), 56-94 (PEKESKAILKARGLEEEQKSERKMTSPENDSKSIQKDQG), and 108-127 (PEKDSKAILKARGLEEEQKS). Residues 1–201 (MGPPEKESKA…TEADKDNGGD (201 aa)) are disordered. The segment covering 128-137 (ESTMSPSENV) has biased composition (polar residues). Over residues 153–173 (ASERKMTSPENDSKSIQKDQG) the composition is skewed to basic and acidic residues. The 323-residue stretch at 243-565 (HTIILHGRPG…AALYYVLEGL (323 aa)) folds into the NACHT domain. 249–256 (GRPGVGKS) contributes to the ATP binding site. LRR repeat units lie at residues 801–822 (NLKYLNLGNTPMKDDDMKLACE), 830–851 (SVETLRLDSCELTIIGYEMIST), 858–878 (RLKCLSLAKNRVGVKSMISLG), 887–906 (LLQKLILDNCGLTPASCHLL), 915–935 (NLTHLCLSNNSLGTEGVQQLC), 944–964 (ALQRLILNHCNIVDDAYGFLA), 972–993 (KLTHLSLTMNPVGDGAMKLLCE), 1001–1022 (YLQELELVDCQLTQNCCEDLAC), 1029–1050 (HLKSLDLGNNALGDKGVITLCE), 1058–1079 (SLRRLGLGACKLTSNCCEALSL), and 1086–1107 (HLNSLNLVKNDFSTSGMLKLCS).

The protein belongs to the NLRP family. As to quaternary structure, component of the subcortical maternal complex (SCMC), at least composed of NLRP5, KHDC3, OOEP, and TLE6. Within the complex, interacts with OOEP, KHDC3 and TLE6. The SCMC may facilitate translocation of its components between the nuclear and cytoplasmic compartments. As part of the SCMC interacts with the SCMC-associated protein ZBED3. As part of the SCMC interacts with the SCMC-associated protein CFL1/Cofilin-1. Interacts with PRKCE. Interacts with TUBB3 at cytoskeleton microtubules. Post-translationally, phosphorylated by PRKCE.

It localises to the cytoplasm. Its subcellular location is the cytoplasmic vesicle. It is found in the secretory vesicle. The protein localises to the cortical granule. The protein resides in the mitochondrion. It localises to the nucleus. Its subcellular location is the nucleolus. It is found in the golgi apparatus. Its function is as follows. Component of the subcortical maternal complex (SCMC), a multiprotein complex that plays a key role in early embryonic development. The SCMC complex is a structural constituent of cytoplasmic lattices, which consist in fibrous structures found in the cytoplasm of oocytes and preimplantation embryos. They are required to store maternal proteins critical for embryonic development, such as proteins that control epigenetic reprogramming of the preimplantation embryo, and prevent their degradation or activation. Required for the localization of cortical granules to the cortex of oocytes, via association with the cortical actin scaffold. Required for cortical actin clearance prior to oocyte exocytosis and prevention of polyspermy. Involved in regulating post-fertilization Ca(2+) release and endoplasmic reticulum storage (ER) storage via regulation of cellular localization. May be involved in the localization of mitochondria to the cytoplasm and perinuclear region in oocytes and early stage embryos, independent of its role in CPL formation. The chain is NACHT, LRR and PYD domains-containing protein 5 from Mus musculus (Mouse).